A 154-amino-acid polypeptide reads, in one-letter code: MSIRIELAESMEVLSLRVVGPYYEKIPQGFDEILSWAREHHLSIDKSLAFYWDDPSKVEADELRADVAITCKEMPSTLPEDVGIRREVIPGGLYAVTHTIVENGDFAKAWDDFYKAINAQGYCPAGDICYESYLCDGSNGKWDIEIWQSVEAAN.

Belongs to the DNA gyrase inhibitor family. In terms of assembly, interacts with DNA gyrase.

It is found in the cytoplasm. Inhibits the supercoiling activity of DNA gyrase. Acts by inhibiting DNA gyrase at an early step, prior to (or at the step of) binding of DNA by the gyrase. It protects cells against toxins that target DNA gyrase, by inhibiting activity of these toxins and reducing the formation of lethal double-strand breaks in the cell. The polypeptide is DNA gyrase inhibitor (Pectobacterium carotovorum subsp. carotovorum (strain PC1)).